The sequence spans 63 residues: Translational regulator CsrA (63 aa).

The protein belongs to the CsrA/RsmA family. In terms of assembly, homodimer; the beta-strands of each monomer intercalate to form a hydrophobic core, while the alpha-helices form wings that extend away from the core.

It localises to the cytoplasm. A key translational regulator that binds mRNA to regulate translation initiation and/or mRNA stability. Mediates global changes in gene expression, shifting from rapid growth to stress survival by linking envelope stress, the stringent response and the catabolite repression systems. Usually binds in the 5'-UTR; binding at or near the Shine-Dalgarno sequence prevents ribosome-binding, repressing translation, binding elsewhere in the 5'-UTR can activate translation and/or stabilize the mRNA. Its function is antagonized by small RNA(s). This Haemophilus influenzae (strain 86-028NP) protein is Translational regulator CsrA.